A 122-amino-acid polypeptide reads, in one-letter code: Putative iron-sulfur cluster insertion protein ErpA (122 aa).

3 residues coordinate iron-sulfur cluster: C50, C114, and C116.

It belongs to the HesB/IscA family. As to quaternary structure, homodimer. Iron-sulfur cluster is required as a cofactor.

Its function is as follows. Required for insertion of 4Fe-4S clusters. In Cupriavidus necator (strain ATCC 17699 / DSM 428 / KCTC 22496 / NCIMB 10442 / H16 / Stanier 337) (Ralstonia eutropha), this protein is Putative iron-sulfur cluster insertion protein ErpA.